The sequence spans 476 residues: PRAME family member 6 (476 aa).

The stretch at 97–124 (RWKLQVLDLQDVCENFWMVWSEAMARGC) is one LRR 1; degenerate repeat. One copy of the LRR 2; degenerate repeat lies at 179–203 (HLCCKKLKILGMPFRNIRSILKMVN). The LRR 3; degenerate repeat unit spans residues 204–230 (LDCIQEVEVNCKWVLPILTQFTPYLGH). The LRR 4; degenerate repeat unit spans residues 231 to 266 (MRNLQKLVLSHMDVSRYVSPEQKKEIVTQFTTQFLK). 5 LRR repeats span residues 267-292 (LCCL…LSCL), 293-324 (KTSL…SQLK), 325-345 (TLDL…QILL), 349-376 (AATL…ALSR), and 377-401 (CFEL…LLSH).

Belongs to the PRAME family. Component of a CRL2 E3 ubiquitin-protein ligase complex, also named ECS (Elongin BC-CUL2/5-SOCS-box protein) complex, composed of CUL2, Elongin BC (ELOB and ELOC), RBX1 and substrate-specific adapter PRAMEF6.

The protein operates within protein modification; protein ubiquitination. Functionally, substrate-recognition component of a Cul2-RING (CRL2) E3 ubiquitin-protein ligase complex, which mediates ubiquitination of target proteins, leading to their degradation. The CRL2(PRAMEF6) complex mediates ubiquitination and degradation of truncated MSRB1/SEPX1 selenoproteins produced by failed UGA/Sec decoding. This Homo sapiens (Human) protein is PRAME family member 6.